The chain runs to 1053 residues: Ubiquitin-like modifier-activating enzyme 6 (1053 aa).

An N-acetylmethionine modification is found at Met-1. Arg-46 is an ATP binding site. A Phosphothreonine modification is found at Thr-54. ATP contacts are provided by Ala-470 and Asp-497. Mg(2+)-binding residues include Asp-499 and Glu-502. ATP is bound by residues Asn-505, Arg-508, Gln-509, and Lys-521. Residue Lys-544 is modified to N6-acetyllysine. Val-545 provides a ligand contact to ATP. Asp-569 is a Mg(2+) binding site. Residue Asn-570 coordinates ATP. Residue Cys-625 is the Glycyl thioester intermediate of the active site. Lys-729 is subject to N6-acetyllysine. Ser-737 bears the Phosphoserine mark.

This sequence belongs to the ubiquitin-activating E1 family. Forms a thioester with UBD in cells stimulated with tumor necrosis factor-alpha (TNFa) and interferon-gamma (IFNg).

The enzyme catalyses ATP + ubiquitin + [E1 ubiquitin-activating enzyme]-L-cysteine = AMP + diphosphate + S-ubiquitinyl-[E1 ubiquitin-activating enzyme]-L-cysteine.. It participates in protein modification; protein ubiquitination. Activates ubiquitin by first adenylating its C-terminal glycine residue with ATP, and thereafter linking this residue to the side chain of a cysteine residue in E1, yielding a ubiquitin-E1 thioester and free AMP. Specific for ubiquitin, does not activate ubiquitin-like peptides. Also activates UBD/FAT10 conjugation via adenylation of its C-terminal glycine. Differs from UBE1 in its specificity for substrate E2 charging. Does not charge cell cycle E2s, such as CDC34. Essential for embryonic development. In Mus musculus (Mouse), this protein is Ubiquitin-like modifier-activating enzyme 6 (Uba6).